A 417-amino-acid polypeptide reads, in one-letter code: UPF0761 membrane protein Daci_4966 (417 aa).

Transmembrane regions (helical) follow at residues 49–69, 106–126, 146–166, 187–207, 235–255, and 256–276; these read VLAL…FPIF, QLGM…ILTI, VLIY…SLVL, FIFD…LYHY, ALGL…TFAT, and LPIL…GAVV.

This sequence belongs to the UPF0761 family.

Its subcellular location is the cell inner membrane. The chain is UPF0761 membrane protein Daci_4966 from Delftia acidovorans (strain DSM 14801 / SPH-1).